The following is a 1221-amino-acid chain: Probable serine/threonine-protein kinase DDB_G0286465 (1221 aa).

Disordered regions lie at residues 1-37, 104-133, and 173-263; these read MTLRLDTSLKRGASRNIPPIPTFSSVSNENLSSSPYT, FSPSTGRTKNNNNNNNNNINNNNYKKNDNQ, and ENNS…NNNE. 4 stretches are compositionally biased toward low complexity: residues 24 to 37, 112 to 127, 173 to 192, and 204 to 263; these read SSVSNENLSSSPYT, KNNNNNNNNNINNNNY, ENNSQNNNNNKYQINNNMQK, and NNNN…NNNE. In terms of domain architecture, Protein kinase spans 186 to 627; it reads INNNMQKTGG…PYKLLDHPFF (442 aa). Residue 192-200 coordinates ATP; that stretch reads KTGGRNGSV. Residue K271 participates in ATP binding. The span at 324-344 shows a compositional bias: low complexity; the sequence is NVNNNNSNNNNNNSNNNITNS. The tract at residues 324–346 is disordered; it reads NVNNNNSNNNNNNSNNNITNSRY. D448 functions as the Proton acceptor in the catalytic mechanism. Low complexity-rich tracts occupy residues 538–550 and 559–584; these read SPSSSSTTSTSTS and DSSSSASSSSSSSSSSSSSSSSSLPK. Disordered stretches follow at residues 538 to 604, 712 to 782, 823 to 858, 959 to 1008, and 1105 to 1152; these read SPSS…PEKR, PNLS…KEKL, KFEKKQRQIQDSEKVNKNEEENQTKDDADNISPPLP, KENI…SYCN, and KKQE…QQEK. Basic and acidic residues predominate over residues 591–604; that stretch reads RSKDNQSKLDPEKR. Residues 725–738 show a composition bias toward low complexity; the sequence is KKQLQQYQQQQKQQ. The segment covering 746–756 has biased composition (acidic residues); that stretch reads DDEEEKEEEEK. 2 stretches are compositionally biased toward basic and acidic residues: residues 757 to 769 and 823 to 850; these read EKEKEKEKEKEKE and KFEKKQRQIQDSEKVNKNEEENQTKDDA. The span at 959–993 shows a compositional bias: low complexity; the sequence is KENIINFHNNNNNNNNNNNNNNNNNNNNNNNNNNN.

The protein belongs to the protein kinase superfamily. Ser/Thr protein kinase family.

It carries out the reaction L-seryl-[protein] + ATP = O-phospho-L-seryl-[protein] + ADP + H(+). It catalyses the reaction L-threonyl-[protein] + ATP = O-phospho-L-threonyl-[protein] + ADP + H(+). The polypeptide is Probable serine/threonine-protein kinase DDB_G0286465 (Dictyostelium discoideum (Social amoeba)).